The following is a 410-amino-acid chain: Argininosuccinate synthase (410 aa).

Residue 10–18 (AYSGGLDTS) participates in ATP binding. L-citrulline is bound by residues Y88 and S93. ATP is bound at residue G118. Positions 120, 124, and 125 each coordinate L-aspartate. Residue N124 coordinates L-citrulline. L-citrulline-binding residues include R128, S177, S186, E262, and Y274.

It belongs to the argininosuccinate synthase family. Type 1 subfamily. As to quaternary structure, homotetramer.

The protein resides in the cytoplasm. It carries out the reaction L-citrulline + L-aspartate + ATP = 2-(N(omega)-L-arginino)succinate + AMP + diphosphate + H(+). Its pathway is amino-acid biosynthesis; L-arginine biosynthesis; L-arginine from L-ornithine and carbamoyl phosphate: step 2/3. The sequence is that of Argininosuccinate synthase from Thermoanaerobacter pseudethanolicus (strain ATCC 33223 / 39E) (Clostridium thermohydrosulfuricum).